A 291-amino-acid polypeptide reads, in one-letter code: Protein/nucleic acid deglycase HchA (291 aa).

Residues 1 to 18 (MSNERDTSRTPTPDHAEH) show a composition bias toward basic and acidic residues. The tract at residues 1 to 20 (MSNERDTSRTPTPDHAEHNA) is disordered. Cys-188 functions as the Nucleophile in the catalytic mechanism.

It belongs to the peptidase C56 family. HchA subfamily.

The protein localises to the cytoplasm. It catalyses the reaction N(omega)-(1-hydroxy-2-oxopropyl)-L-arginyl-[protein] + H2O = lactate + L-arginyl-[protein] + H(+). It carries out the reaction N(6)-(1-hydroxy-2-oxopropyl)-L-lysyl-[protein] + H2O = lactate + L-lysyl-[protein] + H(+). The enzyme catalyses S-(1-hydroxy-2-oxopropyl)-L-cysteinyl-[protein] + H2O = lactate + L-cysteinyl-[protein] + H(+). The catalysed reaction is N(omega)-(1-hydroxy-2-oxoethyl)-L-arginyl-[protein] + H2O = L-arginyl-[protein] + glycolate + H(+). It catalyses the reaction N(6)-(1-hydroxy-2-oxoethyl)-L-lysyl-[protein] + H2O = glycolate + L-lysyl-[protein] + H(+). It carries out the reaction S-(1-hydroxy-2-oxoethyl)-L-cysteinyl-[protein] + H2O = glycolate + L-cysteinyl-[protein] + H(+). The enzyme catalyses N(2)-(1-hydroxy-2-oxopropyl)-dGTP + H2O = lactate + dGTP + H(+). The catalysed reaction is N(2)-(1-hydroxy-2-oxopropyl)-GTP + H2O = lactate + GTP + H(+). It catalyses the reaction N(2)-(1-hydroxy-2-oxopropyl)-GDP + H2O = lactate + GDP + H(+). It carries out the reaction N(2)-(1-hydroxy-2-oxopropyl)-GMP + H2O = lactate + GMP + H(+). The enzyme catalyses N(2)-(1-hydroxy-2-oxoethyl)-dGTP + H2O = dGTP + glycolate + H(+). The catalysed reaction is N(2)-(1-hydroxy-2-oxoethyl)-GTP + H2O = glycolate + GTP + H(+). It catalyses the reaction N(2)-(1-hydroxy-2-oxoethyl)-GDP + H2O = glycolate + GDP + H(+). It carries out the reaction N(2)-(1-hydroxy-2-oxoethyl)-GMP + H2O = glycolate + GMP + H(+). The enzyme catalyses an N(2)-(1-hydroxy-2-oxopropyl)-guanosine in RNA + H2O = a guanosine in RNA + lactate + H(+). The catalysed reaction is an N(2)-(1-hydroxy-2-oxopropyl)-2'-deoxyguanosine in DNA + H2O = a 2'-deoxyguanosine in DNA + lactate + H(+). It catalyses the reaction an N(2)-(1-hydroxy-2-oxoethyl)-guanosine in RNA + H2O = a guanosine in RNA + glycolate + H(+). It carries out the reaction an N(2)-(1-hydroxy-2-oxoethyl)-2'-deoxyguanosine in DNA + H2O = a 2'-deoxyguanosine in DNA + glycolate + H(+). Protein and nucleotide deglycase that catalyzes the deglycation of the Maillard adducts formed between amino groups of proteins or nucleotides and reactive carbonyl groups of glyoxals. Thus, functions as a protein deglycase that repairs methylglyoxal- and glyoxal-glycated proteins, and releases repaired proteins and lactate or glycolate, respectively. Deglycates cysteine, arginine and lysine residues in proteins, and thus reactivates these proteins by reversing glycation by glyoxals. Acts on early glycation intermediates (hemithioacetals and aminocarbinols), preventing the formation of Schiff bases and advanced glycation endproducts (AGE). Also functions as a nucleotide deglycase able to repair glycated guanine in the free nucleotide pool (GTP, GDP, GMP, dGTP) and in DNA and RNA. Is thus involved in a major nucleotide repair system named guanine glycation repair (GG repair), dedicated to reversing methylglyoxal and glyoxal damage via nucleotide sanitization and direct nucleic acid repair. Plays an important role in protecting cells from carbonyl stress. The chain is Protein/nucleic acid deglycase HchA from Pseudomonas aeruginosa (strain LESB58).